The following is a 567-amino-acid chain: Wee1-like protein kinase 2 (567 aa).

2 stretches are compositionally biased toward basic and acidic residues: residues 1–12 and 26–36; these read MDDSSINKELKQ and EGQKEAPESRE. 2 disordered regions span residues 1–103 and 170–191; these read MDDS…DSRS and RSNGKRKTRGDLEEADPGEGKV. Ser-77 bears the Phosphoserine mark. Positions 174-176 match the Nuclear localization signal motif; sequence KRK. The Protein kinase domain occupies 215-494; sequence FLEVEKIGVG…ARSRVLRPSL (280 aa). Residues 221–229 and Lys-244 contribute to the ATP site; that span reads IGVGEFGTV. Positions 318 to 332 match the Nuclear export signal motif; the sequence is KLKDILLQISLGLKY. Asp-342 acts as the Proton acceptor in catalysis. Residues Asn-347 and Asp-384 each coordinate Mg(2+). Residues 497–523 are a coiled coil; that stretch reads AEELQQQLNLEKSKTATLERELREAQQ. A disordered region spans residues 502 to 567; the sequence is QQLNLEKSKT…SSFTCGKSSP (66 aa). Positions 507 to 520 are enriched in basic and acidic residues; it reads EKSKTATLERELRE. The span at 555–567 shows a compositional bias: polar residues; the sequence is AKSSSFTCGKSSP.

The protein belongs to the protein kinase superfamily. Ser/Thr protein kinase family. WEE1 subfamily. In terms of processing, phosphorylation leads to increase its activity.

It localises to the nucleus. The catalysed reaction is L-tyrosyl-[protein] + ATP = O-phospho-L-tyrosyl-[protein] + ADP + H(+). Functionally, oocyte-specific protein tyrosine kinase that phosphorylates and inhibits CDK1 and acts as a key regulator of meiosis during both prophase I and metaphase II. Required to maintain meiotic arrest in oocytes during the germinal vesicle (GV) stage, a long period of quiescence at dictyate prophase I, by phosphorylating CDK1 at 'Tyr-15', leading to inhibit CDK1 activity and prevent meiotic reentry. Also required for metaphase II exit during egg activation by phosphorylating CDK1 at 'Tyr-15', to ensure exit from meiosis in oocytes and promote pronuclear formation. This chain is Wee1-like protein kinase 2 (WEE2), found in Canis lupus familiaris (Dog).